Reading from the N-terminus, the 230-residue chain is LexA repressor (230 aa).

Residues 1-21 (MSDDSSETRTGGRRGADAGLT) are disordered. Positions 44–64 (IREIGDAVGLTSTSSVAHQLR) form a DNA-binding region, H-T-H motif. Catalysis depends on for autocatalytic cleavage activity residues S154 and K191.

The protein belongs to the peptidase S24 family. As to quaternary structure, homodimer.

It catalyses the reaction Hydrolysis of Ala-|-Gly bond in repressor LexA.. Represses a number of genes involved in the response to DNA damage (SOS response), including recA and lexA. In the presence of single-stranded DNA, RecA interacts with LexA causing an autocatalytic cleavage which disrupts the DNA-binding part of LexA, leading to derepression of the SOS regulon and eventually DNA repair. The sequence is that of LexA repressor from Mycobacterium sp. (strain JLS).